The sequence spans 393 residues: 4-hydroxyphenylpyruvate dioxygenase (393 aa).

N-acetylthreonine is present on Thr-2. VOC domains are found at residues 18 to 149 (HFHS…LVEK) and 180 to 338 (MIDH…IFTK). Residue Lys-132 is modified to N6-succinyllysine. Residue His-183 coordinates Fe cation. Ser-211, Ser-226, and Ser-250 each carry phosphoserine. The Fe cation site is built by His-266 and Glu-349.

Belongs to the 4HPPD family. As to quaternary structure, homodimer. Fe cation is required as a cofactor.

The protein localises to the cytoplasm. It localises to the endoplasmic reticulum membrane. Its subcellular location is the golgi apparatus membrane. It catalyses the reaction 3-(4-hydroxyphenyl)pyruvate + O2 = homogentisate + CO2. It functions in the pathway amino-acid degradation; L-phenylalanine degradation; acetoacetate and fumarate from L-phenylalanine: step 3/6. Its function is as follows. Catalyzes the conversion of 4-hydroxyphenylpyruvic acid to homogentisic acid, one of the steps in tyrosine catabolism. This is 4-hydroxyphenylpyruvate dioxygenase (HPD) from Homo sapiens (Human).